The following is a 146-amino-acid chain: Hemoglobin subunit beta-2 (146 aa).

Residues K2–C146 form the Globin domain. Heme b is bound by residues H63 and H92.

Belongs to the globin family. Heterotetramer of two alpha chains and two beta chains. In terms of tissue distribution, red blood cells.

In terms of biological role, involved in oxygen transport from gills to the various peripheral tissues. The sequence is that of Hemoglobin subunit beta-2 (hbb2) from Lycodes reticulatus (Arctic eelpout).